The sequence spans 156 residues: Cytochrome c-type biogenesis protein CcmE (156 aa).

Residues 1 to 16 (MNATKAPGGIKPKHQR) are Cytoplasmic-facing. The helical; Signal-anchor for type II membrane protein transmembrane segment at 17–37 (LVLLVIALVALIGAGLLAAYA) threads the bilayer. The Periplasmic portion of the chain corresponds to 38-156 (LSNQASYFYV…QAEAVVAETK (119 aa)). Heme is bound by residues histidine 131 and tyrosine 135.

The protein belongs to the CcmE/CycJ family.

The protein resides in the cell inner membrane. Functionally, heme chaperone required for the biogenesis of c-type cytochromes. Transiently binds heme delivered by CcmC and transfers the heme to apo-cytochromes in a process facilitated by CcmF and CcmH. In Novosphingobium aromaticivorans (strain ATCC 700278 / DSM 12444 / CCUG 56034 / CIP 105152 / NBRC 16084 / F199), this protein is Cytochrome c-type biogenesis protein CcmE.